We begin with the raw amino-acid sequence, 112 residues long: Prothymosin alpha (112 aa).

Methionine 1 bears the N-acetylmethionine mark. The tract at residues 1–112 is disordered; sequence MSDAAVDTSS…KKQKKTDEDD (112 aa). Serine 2 bears the N-acetylserine; in Prothymosin alpha, N-terminally processed mark. Position 2 is a phosphoserine (serine 2). The residue at position 8 (threonine 8) is a Phosphothreonine. Phosphoserine occurs at positions 9 and 10. Residues threonine 13 and threonine 14 each carry the phosphothreonine modification. The segment covering 13 to 31 has biased composition (basic and acidic residues); sequence TTKDLKEKKEVVEEAENGR. Lysine 15 carries the N6-acetyllysine; alternate modification. Lysine 15 carries the post-translational modification N6-succinyllysine; alternate. Residues 43–84 show a composition bias toward acidic residues; the sequence is ENGEQEADNEVDEEEEEGGEEEEEEEEGDGEEEDGDEDEEAE. A compositionally biased stretch (basic and acidic residues) spans 101 to 112; sequence ETKKQKKTDEDD. Residue threonine 102 is modified to Phosphothreonine. An N6-acetyllysine; alternate modification is found at lysine 103. A Glycyl lysine isopeptide (Lys-Gly) (interchain with G-Cter in SUMO2); alternate cross-link involves residue lysine 103. The residue at position 108 (threonine 108) is a Phosphothreonine.

This sequence belongs to the pro/parathymosin family. As to quaternary structure, interacts with NUPR1; regulates apoptotic process. Covalently linked to a small RNA of about 20 nucleotides.

Its subcellular location is the nucleus. Prothymosin alpha may mediate immune function by conferring resistance to certain opportunistic infections. This chain is Prothymosin alpha (Ptma), found in Rattus norvegicus (Rat).